The primary structure comprises 555 residues: E3 ubiquitin-protein ligase ARIH1 (555 aa).

Residues 1–47 are compositionally biased toward acidic residues; it reads MDSDEGYNYEFDEDEECSEEDSGAEEEEDDDEDEPDDDNLDLGEVEL. The interval 1–93 is disordered; sequence MDSDEGYNYE…GGGGGPGHEQ (93 aa). Residues 65 to 90 are compositionally biased toward gly residues; it reads ETGGGGGSALGPGGGGGGGGGGGGPG. The UBA-like stretch occupies residues 103–151; the sequence is TAEQILQHMVECIREVNEVIQNPATITRILLSHFNWDKEKLMERYFDGN. The residue at position 140 (lysine 140) is an N6-acetyllysine. The segment at 180-391 is TRIAD supradomain; the sequence is QDMPCQICYL…SAWYNCNRYN (212 aa). Residues cysteine 184, cysteine 187, cysteine 201, histidine 203, cysteine 206, cysteine 209, cysteine 229, cysteine 234, cysteine 274, cysteine 279, cysteine 295, cysteine 297, cysteine 302, cysteine 305, histidine 310, cysteine 315, cysteine 342, and cysteine 345 each coordinate Zn(2+). An RING-type 1 zinc finger spans residues 184–234; the sequence is CQICYLNYPNSYFTGLECGHKFCMQCWSEYLTTKIMEEGMGQTISCPAHGC. The IBR-type zinc-finger motif lies at 254 to 315; it reads LKYQHLITNS…GENWHDPVKC (62 aa). The RING-type 2; atypical zinc-finger motif lies at 342–373; that stretch reads CPKCHVTIEKDGGCNHMVCRNQNCKAEFCWVC. Cysteine 355 is a catalytic residue. The Zn(2+) site is built by cysteine 360, cysteine 365, cysteine 370, cysteine 373, histidine 380, and cysteine 387. An ariadne domain region spans residues 406–555; sequence RAALQRYLFY…EKDLWEYIED (150 aa).

Belongs to the RBR family. Ariadne subfamily. Interacts (via the first RING-type zinc finger) with UBE2L3. Associates with cullin-RING ubiquitin ligase (CRL) complexes containing CUL1, CUL2 and CUL3. Interacts with neddylated CUL1. Interacts with neddylated CUL2. Interacts with neddylated CUL3. Interacts with neddylated CUL4A. Widely expressed.

Its subcellular location is the cytoplasm. The protein resides in the nucleus. It localises to the cajal body. It carries out the reaction [E2 ubiquitin-conjugating enzyme]-S-ubiquitinyl-L-cysteine + [acceptor protein]-L-lysine = [E2 ubiquitin-conjugating enzyme]-L-cysteine + [acceptor protein]-N(6)-ubiquitinyl-L-lysine.. It participates in protein modification; protein ubiquitination. Autoinhibited by the ariadne domain, which masks the second RING-type zinc finger that contains the active site and inhibits the E3 activity. Inhibition is relieved upon binding to neddylated cullin-RING ubiquitin ligase complexes, which activate the E3 ligase activity of ARIH1. Its function is as follows. E3 ubiquitin-protein ligase, which catalyzes ubiquitination of target proteins together with ubiquitin-conjugating enzyme E2 UBE2L3. Acts as an atypical E3 ubiquitin-protein ligase by working together with cullin-RING ubiquitin ligase (CRL) complexes and initiating ubiquitination of CRL substrates: associates with CRL complexes and specifically mediates addition of the first ubiquitin on CRLs targets. The initial ubiquitin is then elongated by CDC34/UBE2R1 and UBE2R2. E3 ubiquitin-protein ligase activity is activated upon binding to neddylated cullin-RING ubiquitin ligase complexes. Plays a role in protein translation in response to DNA damage by mediating ubiquitination of EIF4E2, the consequences of EIF4E2 ubiquitination are however unclear. According to a report, EIF4E2 ubiquitination leads to promote EIF4E2 cap-binding and protein translation arrest. According to another report EIF4E2 ubiquitination leads to its subsequent degradation. Acts as the ligase involved in ISGylation of EIF4E2. In vitro, controls the degradation of the LINC (LInker of Nucleoskeleton and Cytoskeleton) complex member SUN2 and may therefore have a role in the formation and localization of the LINC complex, and as a consequence, may act in nuclear subcellular localization and nuclear morphology. The protein is E3 ubiquitin-protein ligase ARIH1 (Arih1) of Mus musculus (Mouse).